The sequence spans 260 residues: Triosephosphate isomerase (260 aa).

11–13 provides a ligand contact to substrate; sequence NWK. Residue His-103 is the Electrophile of the active site. Residue Glu-175 is the Proton acceptor of the active site. Substrate contacts are provided by residues Gly-181, Ser-220, and 241 to 242; that span reads GG.

Belongs to the triosephosphate isomerase family. Homodimer.

The protein localises to the cytoplasm. It carries out the reaction D-glyceraldehyde 3-phosphate = dihydroxyacetone phosphate. It functions in the pathway carbohydrate biosynthesis; gluconeogenesis. It participates in carbohydrate degradation; glycolysis; D-glyceraldehyde 3-phosphate from glycerone phosphate: step 1/1. Functionally, involved in the gluconeogenesis. Catalyzes stereospecifically the conversion of dihydroxyacetone phosphate (DHAP) to D-glyceraldehyde-3-phosphate (G3P). In Shewanella amazonensis (strain ATCC BAA-1098 / SB2B), this protein is Triosephosphate isomerase.